We begin with the raw amino-acid sequence, 310 residues long: Haloalkane dehalogenase (310 aa).

Positions 49 to 295 constitute an AB hydrolase-1 domain; that stretch reads VFLCLHGEPT…DAGHFVQEFG (247 aa). Asp-124 acts as the Nucleophile in catalysis. Chloride-binding residues include Trp-125 and Trp-175. Residue Asp-260 is the Proton donor of the active site. His-289 (proton acceptor) is an active-site residue.

The protein belongs to the haloalkane dehalogenase family. Type 1 subfamily. Monomer.

It catalyses the reaction 1-haloalkane + H2O = a halide anion + a primary alcohol + H(+). It carries out the reaction 1,2-dichloroethane + H2O = 2-chloroethanol + chloride + H(+). It participates in xenobiotic degradation; 1,2-dichloroethane degradation; glycolate from 1,2-dichloroethane: step 1/4. With respect to regulation, inhibited by thiol reagents such as p-chloromercuribenzoate and iodoacetamide. Its function is as follows. Catalyzes hydrolytic cleavage of carbon-halogen bonds in halogenated aliphatic compounds, leading to the formation of the corresponding primary alcohols, halide ions and protons. Has a broad substrate specificity, which includes terminally mono- and di- chlorinated and brominated alkanes (up to C4 only). The highest activity was found with 1,2-dichloroethane, 1,3-dichloropropane, and 1,2-dibromoethane. The chain is Haloalkane dehalogenase (dhlA) from Xanthobacter autotrophicus.